The sequence spans 234 residues: Synaptogyrin-1 (234 aa).

Met-1 is modified (N-acetylmethionine). The Cytoplasmic segment spans residues 1-23 (MEGGAYGAGKAGGAFDPYALVRQ). One can recognise an MARVEL domain in the interval 20 to 173 (LVRQPHTILR…QAVLAFQRYQ (154 aa)). The chain crosses the membrane as a helical span at residues 24-44 (PHTILRVVSWLFSIVVFGSIV). Over 45-71 (NEGYLNSASEGEEFCIYNRNPNACSYG) the chain is Lumenal. The helical transmembrane segment at 72–92 (VAVGVLAFLTCLLYLALDVYF) threads the bilayer. Topologically, residues 93–103 (PQISSVKDRKK) are cytoplasmic. The helical transmembrane segment at 104 to 124 (AVLSDIGVSAFWAFLWFVGFC) threads the bilayer. The Lumenal portion of the chain corresponds to 125-148 (YLANQWQVSKPKDNPLNEGTDAAR). A helical transmembrane segment spans residues 149 to 169 (AAIAFSFFSIFTWAGQAVLAF). Residues 170–234 (QRYQIGADSA…EPQGYQSQGY (65 aa)) lie on the Cytoplasmic side of the membrane. Positions 192–234 (SSMPYAPYVEPSTGPDPAGMGGTYQQPANTFDTEPQGYQSQGY) are disordered. Polar residues predominate over residues 214–234 (TYQQPANTFDTEPQGYQSQGY).

The protein belongs to the synaptogyrin family.

The protein resides in the cytoplasmic vesicle. The protein localises to the secretory vesicle. It is found in the synaptic vesicle membrane. It localises to the melanosome. Functionally, may play a role in regulated exocytosis. Modulates the localization of synaptophysin/SYP into synaptic-like microvesicles and may therefore play a role in synaptic-like microvesicle formation and/or maturation. Involved in the regulation of short-term and long-term synaptic plasticity. The sequence is that of Synaptogyrin-1 from Pongo abelii (Sumatran orangutan).